Here is an 854-residue protein sequence, read N- to C-terminus: A-kinase anchor protein 4 (854 aa).

Positions 1 to 188 are excised as a propeptide; sequence MMAYSDTTMM…MTAAKNTNNN (188 aa). Serine 96, serine 130, serine 190, serine 213, serine 226, and serine 272 each carry phosphoserine. The segment at 184 to 207 is disordered; the sequence is NTNNNQSPSAPPAKPPSTQRAVIS. A PKA-RI and PKA-RII subunit binding domain region spans residues 219–232; that stretch reads FYVNRLSSLVIQMA. The tract at residues 287-323 is disordered; the sequence is RGTGEESREGGQKSFLYSELSNKSKSGDKQMSQRESK. Residues 288–297 show a composition bias toward basic and acidic residues; the sequence is GTGEESREGG. Residue serine 300 is modified to Phosphoserine. Tyrosine 303 bears the Phosphotyrosine mark. 2 positions are modified to phosphoserine: serine 304 and serine 307. Basic and acidic residues predominate over residues 311-323; the sequence is KSGDKQMSQRESK. Residues 336–345 form a PKA-RI-alpha subunit binding domain region; sequence YANQVASDMM. 8 positions are modified to phosphoserine: serine 342, serine 432, serine 443, serine 445, serine 447, serine 450, serine 464, and serine 492. Phosphothreonine is present on threonine 506. Phosphoserine occurs at positions 536, 581, 627, and 703.

It belongs to the AKAP110 family. As to quaternary structure, interacts with PRKAR1A and PRKAR2A. Interacts with ENO4. Interacts with QRICH2. Phosphorylated by STK33 during sperm flagella assembly. In terms of tissue distribution, testis specific; only expressed in round spermatids.

It localises to the cell projection. It is found in the cilium. Its subcellular location is the flagellum. Its function is as follows. Major structural component of sperm fibrous sheath. Plays a role in sperm motility. The polypeptide is A-kinase anchor protein 4 (Homo sapiens (Human)).